A 205-amino-acid polypeptide reads, in one-letter code: Mediator of RNA polymerase II transcription subunit 29 (205 aa).

Over residues 1-27 the composition is skewed to low complexity; that stretch reads MNPNMNMMQMSGPPMMQVSPMMQSSPQ. The interval 1–65 is disordered; it reads MNPNMNMMQM…QQQQQQAEKL (65 aa). The span at 28 to 38 shows a compositional bias: pro residues; sequence PMMPTGPPGPV. Over residues 39–61 the composition is skewed to low complexity; the sequence is PMQQQHQQQQQQQQQQQQQQQQQ.

Belongs to the Mediator complex subunit 29 family. In terms of assembly, component of the Mediator complex.

The protein resides in the nucleus. Its function is as follows. Component of the Mediator complex, a coactivator involved in the regulated transcription of nearly all RNA polymerase II-dependent genes. Mediator functions as a bridge to convey information from gene-specific regulatory proteins to the basal RNA polymerase II transcription machinery. Mediator is recruited to promoters by direct interactions with regulatory proteins and serves as a scaffold for the assembly of a functional preinitiation complex with RNA polymerase II and the general transcription factors. The sequence is that of Mediator of RNA polymerase II transcription subunit 29 (ix) from Drosophila virilis (Fruit fly).